Here is a 465-residue protein sequence, read N- to C-terminus: Argininosuccinate lyase (465 aa).

This sequence belongs to the lyase 1 family. Argininosuccinate lyase subfamily.

The protein localises to the cytoplasm. It catalyses the reaction 2-(N(omega)-L-arginino)succinate = fumarate + L-arginine. It participates in amino-acid biosynthesis; L-arginine biosynthesis; L-arginine from L-ornithine and carbamoyl phosphate: step 3/3. This is Argininosuccinate lyase from Desulfatibacillum aliphaticivorans.